Here is a 1192-residue protein sequence, read N- to C-terminus: Protein pangolin, isoform J (1192 aa).

A Nuclear localization signal motif is present at residues L351–E357. The disordered stretch occupies residues A691–H713. Positions I714–S782 form a DNA-binding region, HMG box. Disordered stretches follow at residues V790–K812, P847–T916, Q955–V986, and Q1136–S1192. The segment covering S862 to D871 has biased composition (acidic residues). 2 stretches are compositionally biased toward low complexity: residues S898–S915 and P957–V986. Composition is skewed to polar residues over residues R1140–S1162 and S1170–S1192.

This sequence belongs to the TCF/LEF family. Binds to the beta-catenin homolog arm or to gro.

Its subcellular location is the nucleus. Its function is as follows. Segment polarity protein. Functions together with arm to transduce the Wingless (Wg) signal in embryos and in developing adult tissues. Acts as a transcriptional activator, but in the absence of arm, it binds to gro and acts as a transcriptional repressor of wg-responsive genes. The sequence is that of Protein pangolin, isoform J from Drosophila melanogaster (Fruit fly).